The following is a 621-amino-acid chain: Chaperone protein HscA homolog (621 aa).

The protein belongs to the heat shock protein 70 family.

Functionally, chaperone involved in the maturation of iron-sulfur cluster-containing proteins. Has a low intrinsic ATPase activity which is markedly stimulated by HscB. The protein is Chaperone protein HscA homolog of Acidithiobacillus ferrooxidans (strain ATCC 23270 / DSM 14882 / CIP 104768 / NCIMB 8455) (Ferrobacillus ferrooxidans (strain ATCC 23270)).